The sequence spans 214 residues: Probable nicotinate-nucleotide adenylyltransferase (214 aa).

The protein belongs to the NadD family.

The catalysed reaction is nicotinate beta-D-ribonucleotide + ATP + H(+) = deamido-NAD(+) + diphosphate. It participates in cofactor biosynthesis; NAD(+) biosynthesis; deamido-NAD(+) from nicotinate D-ribonucleotide: step 1/1. Catalyzes the reversible adenylation of nicotinate mononucleotide (NaMN) to nicotinic acid adenine dinucleotide (NaAD). The polypeptide is Probable nicotinate-nucleotide adenylyltransferase (Pseudomonas aeruginosa (strain UCBPP-PA14)).